A 270-amino-acid polypeptide reads, in one-letter code: Orotidine 5'-phosphate decarboxylase (270 aa).

Substrate is bound by residues Asp-39, 61-63 (KTH), 93-102 (DRKFADIGNT), Tyr-221, and Arg-239. Lys-95 (proton donor) is an active-site residue.

The protein belongs to the OMP decarboxylase family.

The catalysed reaction is orotidine 5'-phosphate + H(+) = UMP + CO2. The protein operates within pyrimidine metabolism; UMP biosynthesis via de novo pathway; UMP from orotate: step 2/2. The sequence is that of Orotidine 5'-phosphate decarboxylase (URA3) from Candida dubliniensis (strain CD36 / ATCC MYA-646 / CBS 7987 / NCPF 3949 / NRRL Y-17841) (Yeast).